Reading from the N-terminus, the 232-residue chain is 7-cyano-7-deazaguanine synthase (232 aa).

An ATP-binding site is contributed by 8–18; the sequence is FSGGQDSTTCL. Residues Cys-187, Cys-196, Cys-199, and Cys-202 each contribute to the Zn(2+) site.

It belongs to the QueC family. It depends on Zn(2+) as a cofactor.

It catalyses the reaction 7-carboxy-7-deazaguanine + NH4(+) + ATP = 7-cyano-7-deazaguanine + ADP + phosphate + H2O + H(+). It functions in the pathway purine metabolism; 7-cyano-7-deazaguanine biosynthesis. Its function is as follows. Catalyzes the ATP-dependent conversion of 7-carboxy-7-deazaguanine (CDG) to 7-cyano-7-deazaguanine (preQ(0)). The polypeptide is 7-cyano-7-deazaguanine synthase (Vibrio campbellii (strain ATCC BAA-1116)).